The sequence spans 94 residues: Pyrimidine/purine nucleoside phosphorylase (94 aa).

It belongs to the nucleoside phosphorylase PpnP family.

It carries out the reaction a purine D-ribonucleoside + phosphate = a purine nucleobase + alpha-D-ribose 1-phosphate. The enzyme catalyses adenosine + phosphate = alpha-D-ribose 1-phosphate + adenine. It catalyses the reaction cytidine + phosphate = cytosine + alpha-D-ribose 1-phosphate. The catalysed reaction is guanosine + phosphate = alpha-D-ribose 1-phosphate + guanine. It carries out the reaction inosine + phosphate = alpha-D-ribose 1-phosphate + hypoxanthine. The enzyme catalyses thymidine + phosphate = 2-deoxy-alpha-D-ribose 1-phosphate + thymine. It catalyses the reaction uridine + phosphate = alpha-D-ribose 1-phosphate + uracil. The catalysed reaction is xanthosine + phosphate = alpha-D-ribose 1-phosphate + xanthine. Functionally, catalyzes the phosphorolysis of diverse nucleosides, yielding D-ribose 1-phosphate and the respective free bases. Can use uridine, adenosine, guanosine, cytidine, thymidine, inosine and xanthosine as substrates. Also catalyzes the reverse reactions. This Salmonella newport (strain SL254) protein is Pyrimidine/purine nucleoside phosphorylase.